The following is a 172-amino-acid chain: Iron-sulfur cluster assembly protein SufA (172 aa).

Residues 1–19 (MFINIFLFLFAATINISSS) form the signal peptide. Residues C96, C164, and C166 each coordinate [4Fe-4S] cluster.

This sequence belongs to the HesB/IscA family. As to quaternary structure, homodimer.

It localises to the plastid. Its subcellular location is the apicoplast. The protein operates within cofactor biosynthesis; iron-sulfur cluster biosynthesis. Its function is as follows. Participates in the sulfur mobilization (SUF) pathway for iron-sulfur (Fe-S) cluster biogenesis. Involved in the pre-assembly of [4Fe-4S] clusters and their transfer to target proteins. This chain is Iron-sulfur cluster assembly protein SufA, found in Plasmodium berghei (strain Anka).